A 2842-amino-acid chain; its full sequence is Adenomatous polyposis coli protein (2842 aa).

The residue at position 2 (Ala-2) is an N-acetylalanine. A coiled-coil region spans residues 2–62; sequence AAASYDQLLK…GSIEDETMTS (61 aa). A phosphoserine mark is found at Ser-105 and Ser-109. A coiled-coil region spans residues 125-260; the sequence is SRESTGYLEE…ASHEAERQLE (136 aa). Residues 238–304 are disordered; that stretch reads AEAERSSQSK…THSAPRRLTS (67 aa). The span at 239 to 259 shows a compositional bias: basic and acidic residues; it reads EAERSSQSKHETASHEAERQL. A compositionally biased stretch (polar residues) spans 268 to 279; sequence NLATSGSGQSSA. 7 ARM repeats span residues 451–493, 503–545, 546–589, 590–636, 637–681, 682–723, and 724–765; these read LMKL…HYSV, LTNL…IASV, LRNL…VLSA, LWNL…GGGI, LRNV…ACGT, LWNL…SAAA, and LRNL…LDAQ. A phosphoserine mark is found at Ser-742, Ser-746, and Ser-778. The segment at 828–877 is disordered; the sequence is VLPSSSSSRGSLDSSRSEKDRSLERERGIGLSTYHSATENPGTSSKRGLQ. Over residues 831–841 the composition is skewed to low complexity; the sequence is SSSSSRGSLDS. Residues 842–855 show a composition bias toward basic and acidic residues; sequence SRSEKDRSLERERG. The segment covering 860 to 877 has biased composition (polar residues); it reads TYHSATENPGTSSKRGLQ. Position 906 is a phosphoserine (Ser-906). Disordered regions lie at residues 921–942 and 956–988; these read RRSSASHTHPNTHNFAKSESSN and RSSNDSLNSVTSSDGYGKRGQMKPSVESYSEDD. Polar residues predominate over residues 931–942; it reads NTHNFAKSESSN. Positions 959–969 are enriched in low complexity; sequence NDSLNSVTSSD. Phosphoserine occurs at positions 985, 1036, and 1040. The interval 1018–1167 is interaction with catenins; sequence ELDTPINYSL…TNYSIKYNEE (150 aa). 4 disordered regions span residues 1058–1078, 1092–1166, 1188–1249, and 1306–1373; these read IKQNEQRQSRSQNTNFPVYSE, GQQE…KYNE, SQKP…CKVP, and ENDV…PEHY. 2 stretches are compositionally biased toward polar residues: residues 1066 to 1078 and 1103 to 1128; these read SRSQNTNFPVYSE and RGTNGSETNRMGSSHAVNQNVNQSLC. Residues 1144–1157 show a composition bias toward basic and acidic residues; it reads RYSEEEQHEEEERP. 2 stretches are compositionally biased toward low complexity: residues 1188–1200 and 1209–1223; these read SQKPSFSFSKTPS and NSPSSEAASAPSSNA. 2 stretches are compositionally biased toward polar residues: residues 1224-1242 and 1323-1340; these read KRQSQLHPSSAQRNGQTPK and VSQSTRTKPSRLQASGLA. The span at 1352–1363 shows a compositional bias: low complexity; sequence SSGAKSPSKSGA. 5 positions are modified to phosphoserine: Ser-1357, Ser-1368, Ser-1382, Ser-1389, and Ser-1392. Disordered stretches follow at residues 1398 to 1474, 1525 to 1568, 1584 to 1609, and 1661 to 1711; these read IASS…VSAA, PPVQ…SDDD, KSSRKAKKLAQTASKLPPPVARKPSQ, and ESPP…IPDL. Thr-1435 is subject to Phosphothreonine. Residues 1435 to 1444 are compositionally biased toward pro residues; sequence TPPPPPPPQP. Acidic residues predominate over residues 1532–1546; that stretch reads NGNETEPEQPEESNE. The span at 1547–1562 shows a compositional bias: basic and acidic residues; sequence NQDKEVEKPDSEKDLL. At Ser-1565 the chain carries Phosphoserine. Residues 1681–1700 are compositionally biased toward basic and acidic residues; the sequence is EFEKRDTIPTEGRSTDEAQR. Residue Ser-1714 is modified to Phosphoserine. Polar residues predominate over residues 1748–1762; the sequence is VQQASMTSSGTNKNQ. 3 disordered regions span residues 1748–1950, 1963–2010, and 2043–2067; these read VQQA…EKLQ, RNSS…APKS, and SSAMPKKRRPSRLKGEGEWQSPRKV. The residue at position 1772 (Ser-1772) is a Phosphoserine. Composition is skewed to basic and acidic residues over residues 1783 to 1792 and 1804 to 1833; these read YRTRVRKNTD and SDNKDSKKQSLKNNPKDLNDKLPDNEDRVR. 3 positions are modified to phosphoserine: Ser-1859, Ser-1861, and Ser-1862. Residues 1864 to 1891 are highly charged; the sequence is DFDDDDVDLSREKAELRKGKESKDSEAK. Positions 1871–1894 are enriched in basic and acidic residues; the sequence is DLSREKAELRKGKESKDSEAKVTC. The span at 1899–1911 shows a compositional bias: low complexity; that stretch reads SSSQQSARKAQAS. Residues 1927–1936 show a composition bias toward polar residues; that stretch reads EQPTFPQSSK. The span at 1937-1949 shows a compositional bias: basic and acidic residues; that stretch reads DVPDRGAATDEKL. Ser-1969 and Ser-1971 each carry phosphoserine. The tract at residues 2034–2058 is interaction with AXIN1; sequence EDDLLRECISSAMPKKRRPSRLKGE. 6 positions are modified to phosphoserine: Ser-2087, Ser-2092, Ser-2125, Ser-2129, Ser-2130, and Ser-2132. 3 disordered regions span residues 2148–2173, 2234–2641, and 2664–2842; these read FHLTPDQEEKPFTSHKGPRILKPGEK, PGVR…AESK, and CPIN…VTSV. Residue Thr-2151 is modified to Phosphothreonine. The basic region stretch occupies residues 2167-2674; it reads ILKPGEKSTL…PINNPRSGRS (508 aa). Composition is skewed to polar residues over residues 2257-2272 and 2283-2347; these read ASKSPSEGPVATTSPR and SPIT…QLPR. Phosphoserine occurs at positions 2260, 2270, and 2283. The span at 2348–2369 shows a compositional bias: low complexity; sequence TSSPSTASTKSSGSGKMSYTSP. Polar residues-rich tracts occupy residues 2370–2411 and 2418–2427; these read GRQL…NGSN and RMSSTKSSGS. The span at 2459 to 2477 shows a compositional bias: low complexity; sequence SASFESLSPSSRPDSPTRS. Residues Ser-2473 and Ser-2535 each carry the phosphoserine modification. The interval 2475-2842 is interaction with DLG1; that stretch reads TRSQAQTPVL…HSGSYLVTSV (368 aa). A compositionally biased stretch (basic and acidic residues) spans 2518–2535; that stretch reads SDGRPSKRHDIARSHSES. The span at 2555–2568 shows a compositional bias: polar residues; it reads SSSLPRVSTWRRTG. At Ser-2569 the chain carries Phosphoserine. Low complexity predominate over residues 2569–2579; it reads SSSSILSASSE. The segment covering 2580-2592 has biased composition (basic and acidic residues); sequence SSEKAKSEDEKHV. Low complexity predominate over residues 2629-2638; that stretch reads TTSSGAASGA. 2 stretches are compositionally biased toward polar residues: residues 2668-2679 and 2702-2713; these read NPRSGRSPTGNT and GKQSVGSGSPVQ. Residues Ser-2671 and Ser-2674 each carry the phosphoserine modification. Residues 2674–2842 form an interaction with MAPRE1 region; that stretch reads SPTGNTPPVI…HSGSYLVTSV (169 aa). Thr-2679 carries the phosphothreonine modification. Ser-2710 and Ser-2723 each carry phosphoserine. Residues 2762-2773 show a composition bias toward low complexity; sequence SSSSSSKHSSPS. Polar residues predominate over residues 2783–2809; it reads FNYNPSPRKSSADSTSARPSQIPTPVG. Ser-2788 carries the phosphoserine modification. The Microtubule tip localization signal signature appears at 2802-2805; that stretch reads SQIP. Positions 2840–2842 match the PDZ-binding motif; it reads TSV.

Belongs to the adenomatous polyposis coli (APC) family. Forms homooligomers. Found in a complex consisting of ARHGEF4, APC and CTNNB1. Found in a complex composed of MACF1, APC, AXIN1, CTNNB1 and GSK3B. The complex composed, at least, of APC, CTNNB1 and GSK3B interacts with JPT1; the interaction requires the inactive form of GSK3B (phosphorylated at 'Ser-9'). Interacts with APC2. Interacts with DLG1 (via PDZ domains) and DLG3 (via PDZ domains). Interacts with alpha- and beta-catenins. Interacts with AXIN1 (via RGS domain). Interacts with ARHGEF4 (via N-terminus). Interacts (via C-terminal residues 2674-2843) with MAPRE1 (via C-terminal residues 206-211); the interaction inhibits association with and bundling of F-actin. Interacts with MAPRE2 and MAPRE3 (via C-terminus). Interacts with DIAPH1; DIAPH1 acts as a scaffold protein for MAPRE1 and APC to stabilize microtubules and promote cell migration. Interacts with DIAPH2. Interacts with SCRIB; may mediate APC targeting to adherens junctions of epithelial cells. Interacts with SPATA13 (via N-terminus and SH3 domain). Interacts with ASAP1 (via SH3 domain). Interacts (at the cell membrane) with AMER1 and AMER2 (via ARM repeats). Interacts with KHDRBS1. Interacts with actin; binds both to F-actin and actin filament bundles. Post-translationally, phosphorylated; phosphorylation enhances the F-actin bundling activity. Phosphorylated by GSK3B. Ubiquitinated, leading to its degradation by the proteasome. Ubiquitination is facilitated by Axin. Deubiquitinated by ZRANB1/TRABID.

The protein localises to the cell junction. The protein resides in the adherens junction. It localises to the cytoplasm. Its subcellular location is the cytoskeleton. It is found in the cell projection. The protein localises to the lamellipodium. The protein resides in the ruffle membrane. It localises to the cell membrane. Tumor suppressor. Promotes rapid degradation of CTNNB1 and participates in Wnt signaling as a negative regulator. APC activity is correlated with its phosphorylation state. Activates the GEF activity of SPATA13 and ARHGEF4. Plays a role in hepatocyte growth factor (HGF)-induced cell migration. Required for MMP9 up-regulation via the JNK signaling pathway in colorectal tumor cells. Associates with both microtubules and actin filaments, components of the cytoskeleton. Plays a role in mediating the organization of F-actin into ordered bundles. Functions downstream of Rho GTPases and DIAPH1 to selectively stabilize microtubules. Acts as a mediator of ERBB2-dependent stabilization of microtubules at the cell cortex. It is required for the localization of MACF1 to the cell membrane and this localization of MACF1 is critical for its function in microtubule stabilization. The protein is Adenomatous polyposis coli protein (Apc) of Rattus norvegicus (Rat).